The following is an 83-amino-acid chain: Putative membrane protein insertion efficiency factor (83 aa).

Residues 64–83 (GGFDPVPLKKDKNSKTTHHH) form a disordered region.

It belongs to the UPF0161 family.

The protein localises to the cell membrane. Functionally, could be involved in insertion of integral membrane proteins into the membrane. The sequence is that of Putative membrane protein insertion efficiency factor from Staphylococcus epidermidis (strain ATCC 12228 / FDA PCI 1200).